A 290-amino-acid polypeptide reads, in one-letter code: Nucleoid occlusion protein (290 aa).

Positions 153 to 172 form a DNA-binding region, H-T-H motif; it reads EALAQRLGKGQSTIANKLRL.

This sequence belongs to the ParB family.

Its subcellular location is the cytoplasm. It localises to the nucleoid. Functionally, effects nucleoid occlusion by binding relatively nonspecifically to DNA and preventing the assembly of the division machinery in the vicinity of the nucleoid, especially under conditions that disturb the cell cycle. It helps to coordinate cell division and chromosome segregation by preventing the formation of the Z ring through the nucleoid, which would cause chromosome breakage. This chain is Nucleoid occlusion protein, found in Bacillus anthracis (strain A0248).